The chain runs to 345 residues: Phosphoribosylformylglycinamidine cyclo-ligase (345 aa).

It belongs to the AIR synthase family.

The protein resides in the cytoplasm. It catalyses the reaction 2-formamido-N(1)-(5-O-phospho-beta-D-ribosyl)acetamidine + ATP = 5-amino-1-(5-phospho-beta-D-ribosyl)imidazole + ADP + phosphate + H(+). It participates in purine metabolism; IMP biosynthesis via de novo pathway; 5-amino-1-(5-phospho-D-ribosyl)imidazole from N(2)-formyl-N(1)-(5-phospho-D-ribosyl)glycinamide: step 2/2. The chain is Phosphoribosylformylglycinamidine cyclo-ligase from Escherichia coli O6:K15:H31 (strain 536 / UPEC).